Here is a 485-residue protein sequence, read N- to C-terminus: Choline/ethanolamine transporter flvcr2b (485 aa).

Residues 1-46 lie on the Cytoplasmic side of the membrane; that stretch reads MDTRFNDINRVKMGDESKSVDGEVNDNTYYSKTDAEVNFEHRYTTP. Residues 47 to 71 form a helical membrane-spanning segment; it reads ETRLYKKRWVIVCLFSSYSLCNSYQ. Choline is bound by residues asparagine 68 and tryptophan 72. The Extracellular segment spans residues 72 to 89; sequence WIQYGIINNIFMRFYGVD. The helical transmembrane segment at 90 to 117 threads the bilayer; sequence SFTIDWMSMIYMLTYIPLIFPVSWLLDK. Residues 118–119 are Cytoplasmic-facing; sequence KG. A helical transmembrane segment spans residues 120 to 139; that stretch reads LRVIALVAAALNCAGTWIKV. Over 140–146 the chain is Extracellular; the sequence is ASARPDL. Residues 147-175 form a helical membrane-spanning segment; the sequence is FPVTFLGQFTCSVAQVFILGMPSRIASVW. Choline-binding residues include glutamine 161 and leucine 165. Over 176–180 the chain is Cytoplasmic; sequence FGSDE. Residues 181–206 traverse the membrane as a helical segment; sequence VSTACSIGVFGNQLGIAIGFLVPPIL. Residues 207–211 are Extracellular-facing; sequence VPNVD. The helical transmembrane segment at 212–241 threads the bilayer; sequence DLDELAAHIRVMFYITAGVATFLFVLVVIV. At 242–277 the chain is on the cytoplasmic side; it reads FQERPEIPPTLAQAAARRISPESYSYTASILRLLRN. Residues 278–308 traverse the membrane as a helical segment; it reads KAFILLVITYGLNVGCFYAVSTLLNRMIIEH. Tyrosine 295 serves as a coordination point for choline. At 309-312 the chain is on the extracellular side; that stretch reads YPGE. Residues 313 to 341 form a helical membrane-spanning segment; that stretch reads EVNAGRIGLTIVVAGMVGSLICGIWLDRS. At 342-343 the chain is on the cytoplasmic side; sequence KT. Residues 344-366 form a helical membrane-spanning segment; it reads YKQTTLAVYLMSLMGLVIYAFTL. The Extracellular portion of the chain corresponds to 367–369; sequence DLH. A helical transmembrane segment spans residues 370–399; the sequence is HLWVVFITAGALGFFMTGYLPLGFEFAVEL. Over 400–407 the chain is Cytoplasmic; the sequence is TYPESEGT. The chain crosses the membrane as a helical span at residues 408-433; it reads SSGLLNCSAQVFGIIFTICQGKIMDS. Glutamine 417 contacts choline. Residues 434–435 are Extracellular-facing; that stretch reads FG. A helical membrane pass occupies residues 436 to 458; the sequence is TLAGNLFLCAFLLIGTIITGCIK. Topologically, residues 459–485 are cytoplasmic; that stretch reads SDLRRQLANQQAQTADHLDTSPTQTRF.

Belongs to the major facilitator superfamily. Feline leukemia virus subgroup C receptor (TC 2.A.1.28.1) family.

Its subcellular location is the cell membrane. The protein localises to the mitochondrion membrane. The protein resides in the endoplasmic reticulum membrane. It catalyses the reaction choline(out) = choline(in). It carries out the reaction ethanolamine(in) = ethanolamine(out). The enzyme catalyses heme b(in) = heme b(out). Choline uniporter that specifically mediates choline uptake at the blood-brain-barrier. Responsible for the majority of choline uptake across the blood-brain-barrier from the circulation into the brain. Choline, a nutrient critical for brain development, is a precursor of phosphatidylcholine, as well as betaine. Also mediates transport of ethanolamine. Choline and ethanolamine transport is not coupled with proton transport and is exclusively driven by the choline gradient across the plasma membrane. Also acts as a heme b transporter. The protein is Choline/ethanolamine transporter flvcr2b of Danio rerio (Zebrafish).